The chain runs to 473 residues: Membrane-bound acylglycerophosphatidylinositol O-acyltransferase MBOAT7 (473 aa).

At 1–5 (MTPEE) the chain is on the cytoplasmic side. Residues 6–22 (WTYLMVLLISIPVGFLF) form a helical membrane-spanning segment. The Lumenal portion of the chain corresponds to 23–33 (KKAGPGLKRWG). A helical transmembrane segment spans residues 34-57 (AAAVGLGLTLFTCGPHSLHSLITI). Topologically, residues 58 to 73 (LGTWALIQAQPCSCHA) are cytoplasmic. Residues 74 to 93 (LALAWTFSYLLFFRALSLLG) traverse the membrane as a helical segment. The Lumenal segment spans residues 94–194 (LPTPTPFTNA…VPSLRPLLRR (101 aa)). A helical membrane pass occupies residues 195-212 (AWPAPLFGLLFLLSSHLF). Topologically, residues 213–231 (PLEAVREDAFYARPLPTRL) are cytoplasmic. A helical membrane pass occupies residues 232–261 (FYMIPVFFAFRMRFYVAWIAAECGCIAAGF). The Lumenal portion of the chain corresponds to 262 to 426 (GAYPVAAKAR…LSMADTLRYW (165 aa)). Asn321 carries an N-linked (GlcNAc...) asparagine glycan. A helical transmembrane segment spans residues 427 to 447 (ASIYFWVHFLALACLGLGLVL). Residues 448–473 (GGGSPSKRKTPSQATSSQAKEKLREE) are Cytoplasmic-facing. The tract at residues 451–473 (SPSKRKTPSQATSSQAKEKLREE) is disordered.

The protein belongs to the membrane-bound acyltransferase family. In terms of assembly, interacts with SPTSSA; the interaction facilitates MBOAT7 location to mitochondria-associated membranes (MAMs).

It localises to the endoplasmic reticulum membrane. The catalysed reaction is a 1-acyl-sn-glycero-3-phospho-(1D-myo-inositol) + an acyl-CoA = a 1,2-diacyl-sn-glycero-3-phospho-(1D-myo-inositol) + CoA. It carries out the reaction 1-octadecanoyl-sn-glycero-3-phospho-(1D-myo-inositol) + (5Z,8Z,11Z,14Z)-eicosatetraenoyl-CoA = 1-octadecanoyl-2-(5Z,8Z,11Z,14Z-eicosatetraenoyl)-sn-glycero-3-phospho-(1D-myo-inositol) + CoA. It catalyses the reaction a 1-acyl-sn-glycero-3-phospho-(1D-myo-inositol) + (5Z,8Z,11Z,14Z)-eicosatetraenoyl-CoA = a 1-acyl-2-(5Z,8Z,11Z,14Z-eicosatetraenoyl)-sn-glycero-3-phospho-(1D-myo-inositol) + CoA. The enzyme catalyses (5Z,8Z,11Z,14Z)-eicosatetraenoyl-CoA + 1-hexadecanoyl-sn-glycero-3-phosphocholine = 1-hexadecanoyl-2-(5Z,8Z,11Z,14Z-eicosatetraenoyl)-sn-glycero-3-phosphocholine + CoA. The protein operates within lipid metabolism; phospholipid metabolism. Its function is as follows. Acyltransferase which catalyzes the transfer of an acyl group from an acyl-CoA to a lysophosphatidylinositol (1-acylglycerophosphatidylinositol or LPI) leading to the production of a phosphatidylinositol (1,2-diacyl-sn-glycero-3-phosphoinositol or PI) and participates in the reacylation step of the phospholipid remodeling pathway also known as the Lands cycle. Prefers arachidonoyl-CoA as the acyl donor, thus contributing to the regulation of free levels arachidonic acid in cell. In liver, participates in the regulation of triglyceride metabolism through the phosphatidylinositol acyl-chain remodeling regulation. In Mus musculus (Mouse), this protein is Membrane-bound acylglycerophosphatidylinositol O-acyltransferase MBOAT7.